A 983-amino-acid polypeptide reads, in one-letter code: 3',5'-cyclic-AMP phosphodiesterase, isoforms N/G (983 aa).

Disordered stretches follow at residues 31–333, 349–370, 400–429, and 528–566; these read MPEG…SAGL, SDSDFEMSPKSMSRNSSIASES, VPASNKSRRPNQSSSASRSGNPPGAPLSQG, and SAGQYARSRSPRGPPMSQISGVKRPLSHTNSFTGERLPT. Residues 35–50 are compositionally biased toward basic and acidic residues; the sequence is GEDHRGDLNQKGENNN. Residues 51 to 60 are compositionally biased toward polar residues; sequence RPRPSISLAN. The span at 84–97 shows a compositional bias: gly residues; it reads SVGGGDSDGGGEAI. Low complexity-rich tracts occupy residues 112-121 and 145-167; these read LSTTTSNSSS and QLQQHSSSLSNGNRGNRGLSQRS. Positions 174 to 199 are enriched in acidic residues; that stretch reads AEGEEFDVDPMDEDDEDQTYDRETEE. Composition is skewed to low complexity over residues 219-234 and 248-261; these read SSLFSRSDSSATTTSS and AASILSSSMCSDLM. Polar residues-rich tracts occupy residues 268–287, 358–368, and 401–419; these read STATEYSVKSVTTGNTSQRR, KSMSRNSSIAS, and PASNKSRRPNQSSSASRSG. The 330-residue stretch at 569 to 898 folds into the PDEase domain; sequence VETPRENELG…DYYQSMIPPS (330 aa). The active-site Proton donor is the histidine 645. 645-649 lines the 3',5'-cyclic AMP pocket; that stretch reads HNSLH. Histidine 649, histidine 685, aspartate 686, and aspartate 803 together coordinate a divalent metal cation. Positions 686, 803, and 854 each coordinate 3',5'-cyclic AMP. Acidic residues predominate over residues 920–937; it reads EESDQENLAELEEGDESG. Residues 920-983 form a disordered region; that stretch reads EESDQENLAE…CQNQPQHGGM (64 aa). Residues 938–955 show a composition bias toward low complexity; sequence GESTTTGTTGTTAASALS. A compositionally biased stretch (gly residues) spans 956-967; sequence GAGGGGGGGGGM. Positions 973–983 are enriched in polar residues; sequence GCQNQPQHGGM.

This sequence belongs to the cyclic nucleotide phosphodiesterase family. PDE4 subfamily. In terms of assembly, monomer. A divalent metal cation serves as cofactor.

The enzyme catalyses 3',5'-cyclic AMP + H2O = AMP + H(+). The protein operates within purine metabolism; 3',5'-cyclic AMP degradation; AMP from 3',5'-cyclic AMP: step 1/1. Functionally, hydrolyzes the second messenger cAMP, which is a key regulator of many important physiological processes. Vital for female fertility. Required for learning/memory. This Drosophila melanogaster (Fruit fly) protein is 3',5'-cyclic-AMP phosphodiesterase, isoforms N/G.